The following is a 38-amino-acid chain: Small ribosomal subunit protein eS32 (38 aa).

This sequence belongs to the eukaryotic ribosomal protein eS32 family. As to quaternary structure, component of the small ribosomal subunit (SSU).

This chain is Small ribosomal subunit protein eS32 (rpl41e), found in Methanocaldococcus jannaschii (strain ATCC 43067 / DSM 2661 / JAL-1 / JCM 10045 / NBRC 100440) (Methanococcus jannaschii).